The primary structure comprises 316 residues: Bifunctional peptidase and (3S)-lysyl hydroxylase JMJD7 (316 aa).

Residue cysteine 19 is modified to Cysteine sulfenic acid (-SOH). 2 residues coordinate 2-oxoglutarate: tyrosine 123 and threonine 172. Residue tyrosine 123 coordinates succinate. The JmjC domain occupies 124 to 310 (IQKQNSNLSV…YCYYRMLEQM (187 aa)). Fe cation contacts are provided by histidine 175 and aspartate 177. 3 residues coordinate 2-oxoglutarate: asparagine 181, tyrosine 183, and lysine 190. The succinate site is built by tyrosine 183 and lysine 190. Histidine 278 contributes to the Fe cation binding site. Tryptophan 292 contributes to the 2-oxoglutarate binding site.

As to quaternary structure, homodimer; disulfide-linked. Fe(2+) serves as cofactor. Expressed in the pars intercerebralis and fan-shaped body, regions known to be involved in sleep.

The protein resides in the nucleus. Its subcellular location is the cytoplasm. It catalyses the reaction L-lysyl-[protein] + 2-oxoglutarate + O2 = (3S)-3-hydroxy-L-lysyl-[protein] + succinate + CO2. Functionally, bifunctional enzyme that acts both as an endopeptidase and 2-oxoglutarate-dependent monooxygenase. Endopeptidase that cleaves histones N-terminal tails at the carboxyl side of methylated arginine or lysine residues, to generate 'tailless nucleosomes', which may trigger transcription elongation. Hydroxylates the guanylate binding protein 128up. May be involved in regulation of behavior and circadian rhythms. In Drosophila melanogaster (Fruit fly), this protein is Bifunctional peptidase and (3S)-lysyl hydroxylase JMJD7.